Consider the following 38-residue polypeptide: Large ribosomal subunit protein bL36c (38 aa).

It belongs to the bacterial ribosomal protein bL36 family.

The protein localises to the plastid. It is found in the apicoplast. In Theileria parva (East coast fever infection agent), this protein is Large ribosomal subunit protein bL36c (rpl36).